The sequence spans 639 residues: MAESDGSNNENGNLDTVTQKLDRGVAAIKPQYLTTKEKFHVFIDADGKEVVDKQTCSELSGNDAENTVRAEDAAEPEAKRIKLDDGTGEGQDKPPTSAENKQEKKRARGQNKSRPHMKHSQFEENKLCPSVTQECASKCFFGDKCKFLHDVAKYVSEKPEDIRPNCYLYETFGKCIYGVTCRFAKSHLGDNFKNLINEELMKQWEGQVLVKNSLDKSLKEQLRKRKVVFEKTDKYLKLCNKSGDSLKIKSPVVKEDNAAQVVQKDSPVTTVGAVTDEDLVKLRPCEKKTIDFRNKLYLAPLTTCGNLPFRRLCKRFGADITCGEMAMCTNLLQGQPSEWALLKRHHSEDIFGVQLEGAFPDTMTKCAELLNRTIDVDFVDINVGCPIDLVYKKGGGCGLMNRTNKFEQIVKGMNSVLDVPLTVKIRTGVQEKINIAHKLIPNLRDWGVSLVTLHGRSREQRYTKLADWEYIAQCADIASPLPLFGNGDIISYEDANRALQTGVSGIMLARGALLKPWLFTEIKEQRHWDISSTERFDILKDFTNYGLEHWGSDCQGVEKTRRFMLEWLSFLCRYIPIGLLEHVPQKINERPPYYMGRDYMETLMASQNVTDWIKISEMLLGPVPPNFSFLPKHKANSYK.

Composition is skewed to polar residues over residues 1–19 (MAESDGSNNENGNLDTVTQ) and 54–65 (QTCSELSGNDAE). 2 disordered regions span residues 1–20 (MAESDGSNNENGNLDTVTQK) and 52–122 (DKQT…HSQF). A compositionally biased stretch (basic and acidic residues) spans 66–85 (NTVRAEDAAEPEAKRIKLDD). Residues 103-119 (EKKRARGQNKSRPHMKH) are compositionally biased toward basic residues. C3H1-type zinc fingers lie at residues 122-152 (FEENKLCPSVTQECASKCFFGDKCKFLHDVA) and 160-190 (EDIRPNCYLYETFGKCIYGVTCRFAKSHLGD). FMN-binding positions include 300-302 (PLT) and glutamine 354. Cysteine 385 functions as the Proton donor in the catalytic mechanism. FMN is bound by residues lysine 424, histidine 454, 486–488 (NGD), and 509–510 (AR).

It belongs to the Dus family. Dus3 subfamily. It depends on FMN as a cofactor.

It carries out the reaction 5,6-dihydrouridine(47) in tRNA + NAD(+) = uridine(47) in tRNA + NADH + H(+). The enzyme catalyses 5,6-dihydrouridine(47) in tRNA + NADP(+) = uridine(47) in tRNA + NADPH + H(+). The catalysed reaction is a 5,6-dihydrouridine in mRNA + NAD(+) = a uridine in mRNA + NADH + H(+). It catalyses the reaction a 5,6-dihydrouridine in mRNA + NADP(+) = a uridine in mRNA + NADPH + H(+). Its function is as follows. Catalyzes the synthesis of dihydrouridine, a modified base, in various RNAs, such as tRNAs, mRNAs and some long non-coding RNAs (lncRNAs). Mainly modifies the uridine in position 47 (U47) in the D-loop of most cytoplasmic tRNAs. Also able to mediate the formation of dihydrouridine in some mRNAs, thereby regulating their translation. The protein is tRNA-dihydrouridine(47) synthase [NAD(P)(+)]-like (dus3l) of Xenopus tropicalis (Western clawed frog).